The sequence spans 144 residues: Small ribosomal subunit protein uS11c (144 aa).

The protein belongs to the universal ribosomal protein uS11 family. As to quaternary structure, part of the 30S ribosomal subunit.

Its subcellular location is the plastid. It is found in the chloroplast. The chain is Small ribosomal subunit protein uS11c from Oenothera biennis (German evening primrose).